Here is a 157-residue protein sequence, read N- to C-terminus: MLIENVEYDVLLERFKKILRQGGLKYTKQREVLLKTLYHSDTHYTPESLYMEIKQAEPDLNVGIATVYRTLNLLEEAEMVTSISFGSAGKKYELANKPHHDHMICKNCGKIIEFENPIIERQQALIAKEHGFKLTGHLMQLYGVCGDCNNQKAKVKI.

The segment at 1–96 (MLIENVEYDV…SAGKKYELAN (96 aa)) is DNA-binding. The Zn(2+) site is built by His43 and Glu93. The tract at residues 97-157 (KPHHDHMICK…CNNQKAKVKI (61 aa)) is dimerization. Residues His99 and Asp101 each contribute to the Fe cation site. His102, Cys105, Cys108, and Glu113 together coordinate Zn(2+). The Fe cation site is built by Glu120 and His137.

The protein belongs to the Fur family. As to quaternary structure, homodimer.

Its subcellular location is the cytoplasm. Functionally, acts as a global negative controlling element, employing Fe(2+) as a cofactor to bind the operator of the repressed genes. The chain is Ferric uptake regulation protein (fur) from Campylobacter jejuni subsp. jejuni serotype O:2 (strain ATCC 700819 / NCTC 11168).